Here is a 203-residue protein sequence, read N- to C-terminus: Ribosomal RNA large subunit methyltransferase E (203 aa).

Residues Gly-59, Trp-61, Asp-79, Asp-97, and Asp-119 each coordinate S-adenosyl-L-methionine. Lys-159 acts as the Proton acceptor in catalysis.

This sequence belongs to the class I-like SAM-binding methyltransferase superfamily. RNA methyltransferase RlmE family.

It is found in the cytoplasm. It carries out the reaction uridine(2552) in 23S rRNA + S-adenosyl-L-methionine = 2'-O-methyluridine(2552) in 23S rRNA + S-adenosyl-L-homocysteine + H(+). In terms of biological role, specifically methylates the uridine in position 2552 of 23S rRNA at the 2'-O position of the ribose in the fully assembled 50S ribosomal subunit. The chain is Ribosomal RNA large subunit methyltransferase E from Desulforapulum autotrophicum (strain ATCC 43914 / DSM 3382 / VKM B-1955 / HRM2) (Desulfobacterium autotrophicum).